Consider the following 181-residue polypeptide: Inner membrane-spanning protein YciB (181 aa).

A run of 5 helical transmembrane segments spans residues 10–30, 50–70, 72–92, 118–138, and 148–168; these read LVIF…GALI, MHLI…ILHD, SFIK…LGVS, VTWY…YVAF, and FKVF…VVYL.

The protein belongs to the YciB family.

The protein localises to the cell inner membrane. Plays a role in cell envelope biogenesis, maintenance of cell envelope integrity and membrane homeostasis. The protein is Inner membrane-spanning protein YciB of Shewanella pealeana (strain ATCC 700345 / ANG-SQ1).